The primary structure comprises 430 residues: Adenylosuccinate synthetase (430 aa).

Residues 12 to 18 and 40 to 42 contribute to the GTP site; these read GDEGKGK and GHT. Catalysis depends on Asp13, which acts as the Proton acceptor. Mg(2+) contacts are provided by Asp13 and Gly40. IMP is bound by residues 13-16, 38-41, Thr128, Arg142, Gln223, Thr238, and Arg302; these read DEGK and NAGH. The active-site Proton donor is the His41. GTP is bound by residues 330 to 332 and 412 to 414; these read SID and SVG.

It belongs to the adenylosuccinate synthetase family. In terms of assembly, homodimer. The cofactor is Mg(2+).

The protein resides in the cytoplasm. The enzyme catalyses IMP + L-aspartate + GTP = N(6)-(1,2-dicarboxyethyl)-AMP + GDP + phosphate + 2 H(+). The protein operates within purine metabolism; AMP biosynthesis via de novo pathway; AMP from IMP: step 1/2. Functionally, plays an important role in the de novo pathway of purine nucleotide biosynthesis. Catalyzes the first committed step in the biosynthesis of AMP from IMP. This chain is Adenylosuccinate synthetase, found in Bacillus subtilis (strain 168).